We begin with the raw amino-acid sequence, 367 residues long: Ataxin-7-like protein 3 (367 aa).

The SGF11-type zinc-finger motif lies at 84–105; it reads CVCPNCSRSIAASRFAPHLEKC. The segment covering 116–125 has biased composition (low complexity); it reads ANRRIASSNN. The segment at 116–184 is disordered; the sequence is ANRRIASSNN…GELSGSVNPD (69 aa). Residues 132-141 are compositionally biased toward acidic residues; the sequence is DQEDNDDIND. One can recognise an SCA7 domain in the interval 199-266; that stretch reads LGPEELRSIL…TMLENEAYEP (68 aa). A compositionally biased stretch (low complexity) spans 280–299; that stretch reads ASSDISPSDSASSKASTNNS. Positions 280–367 are disordered; the sequence is ASSDISPSDS…PAPSIYDDLN (88 aa). The span at 318–329 shows a compositional bias: basic and acidic residues; the sequence is GERDKAQERDRI. Positions 330-346 are enriched in low complexity; that stretch reads AGSGSSGSSSQNALGLS.

Belongs to the SGF11 family. Component of some SAGA transcription coactivator-HAT complexes. Within the SAGA complex, participates in a subcomplex of SAGA called the DUB module (deubiquitination module).

The protein localises to the nucleus. Functionally, component of the transcription regulatory histone acetylation (HAT) complex SAGA, a multiprotein complex that activates transcription by remodeling chromatin and mediating histone acetylation and deubiquitination. Within the SAGA complex, participates in a subcomplex that specifically deubiquitinates histone H2B. The SAGA complex is recruited to specific gene promoters by activators, where it is required for transcription. This is Ataxin-7-like protein 3 (atxn7l3) from Danio rerio (Zebrafish).